Consider the following 809-residue polypeptide: Penicillin-binding protein 1A (809 aa).

Over 1–34 the chain is Cytoplasmic; the sequence is MSDNTKTNSRNKSVKRTKKVKKKKKFGFFKKLFT. Residues 35–55 form a helical; Signal-anchor for type II membrane protein membrane-spanning segment; it reads ILFCLFILLSVAASGVIFAIV. Topologically, residues 56–809 are extracellular; it reads KTSPNLDING…PNNNTTNTNK (754 aa). Residues 74–251 are transglycosylase; the sequence is SQLYDDNNNP…PSAYYPFSQN (178 aa). The active-site Proton donor; for transglycosylase activity is the Glu113. Residues 381–664 are transpeptidase; the sequence is AAATLFDYHT…VAEIWGEIMK (284 aa). Residue Ser422 is the Acyl-ester intermediate; for transpeptidase activity of the active site. The segment at 694-809 is disordered; it reads SPSNLSGDDS…PNNNTTNTNK (116 aa).

This sequence in the N-terminal section; belongs to the glycosyltransferase 51 family. The protein in the C-terminal section; belongs to the transpeptidase family.

The protein resides in the cell membrane. It catalyses the reaction [GlcNAc-(1-&gt;4)-Mur2Ac(oyl-L-Ala-gamma-D-Glu-L-Lys-D-Ala-D-Ala)](n)-di-trans,octa-cis-undecaprenyl diphosphate + beta-D-GlcNAc-(1-&gt;4)-Mur2Ac(oyl-L-Ala-gamma-D-Glu-L-Lys-D-Ala-D-Ala)-di-trans,octa-cis-undecaprenyl diphosphate = [GlcNAc-(1-&gt;4)-Mur2Ac(oyl-L-Ala-gamma-D-Glu-L-Lys-D-Ala-D-Ala)](n+1)-di-trans,octa-cis-undecaprenyl diphosphate + di-trans,octa-cis-undecaprenyl diphosphate + H(+). The catalysed reaction is Preferential cleavage: (Ac)2-L-Lys-D-Ala-|-D-Ala. Also transpeptidation of peptidyl-alanyl moieties that are N-acyl substituents of D-alanine.. The protein operates within cell wall biogenesis; peptidoglycan biosynthesis. In terms of biological role, cell wall formation. Synthesis of cross-linked peptidoglycan from the lipid intermediates. The enzyme has a penicillin-insensitive transglycosylase N-terminal domain (formation of linear glycan strands) and a penicillin-sensitive transpeptidase C-terminal domain (cross-linking of the peptide subunits). The polypeptide is Penicillin-binding protein 1A (pbpA) (Clostridium acetobutylicum (strain ATCC 824 / DSM 792 / JCM 1419 / IAM 19013 / LMG 5710 / NBRC 13948 / NRRL B-527 / VKM B-1787 / 2291 / W)).